Reading from the N-terminus, the 78-residue chain is MARVCVVTGKKPMVGNNVSHANNKTKRRFLPNLQYRRFWVESENRWVRLRLSNAALRTIDKNGIESVLADLRARGEAV.

The protein belongs to the bacterial ribosomal protein bL28 family.

The protein is Large ribosomal subunit protein bL28 of Thiobacillus denitrificans (strain ATCC 25259 / T1).